The primary structure comprises 122 residues: uncharacterized protein (122 aa).

Positions 1–17 (MKYSSIFSMLSFFILFA) are cleaved as a signal peptide.

This is an uncharacterized protein from Escherichia coli (strain K12).